The sequence spans 452 residues: Pup--protein ligase (452 aa).

Mg(2+) is bound at residue Glu-9. Arg-53 provides a ligand contact to ATP. Tyr-55 serves as a coordination point for Mg(2+). The active-site Proton acceptor is Asp-57. Glu-63 provides a ligand contact to Mg(2+). The ATP site is built by Thr-66 and Trp-419.

This sequence belongs to the Pup ligase/Pup deamidase family. Pup-conjugating enzyme subfamily.

It catalyses the reaction ATP + [prokaryotic ubiquitin-like protein]-L-glutamate + [protein]-L-lysine = ADP + phosphate + N(6)-([prokaryotic ubiquitin-like protein]-gamma-L-glutamyl)-[protein]-L-lysine.. It participates in protein degradation; proteasomal Pup-dependent pathway. The protein operates within protein modification; protein pupylation. Its function is as follows. Catalyzes the covalent attachment of the prokaryotic ubiquitin-like protein modifier Pup to the proteasomal substrate proteins, thereby targeting them for proteasomal degradation. This tagging system is termed pupylation. The ligation reaction involves the side-chain carboxylate of the C-terminal glutamate of Pup and the side-chain amino group of a substrate lysine. The protein is Pup--protein ligase of Rhodococcus erythropolis (strain PR4 / NBRC 100887).